The primary structure comprises 1446 residues: Toll-like receptor 7 (1446 aa).

The signal sequence occupies residues 1–16 (MAAILLLLLGFSWSLA). Topologically, residues 17 to 1049 (VESALAPKES…QHGIPESYIP (1033 aa)) are extracellular. LRR repeat units follow at residues 133 to 156 (LQTLEALRLDSCKLLQLPNNAFEG), 158 to 180 (ATLKSLRLSTHNSEWGPTRTLEL), 188 to 211 (LKQLTDLDLGDNNLRQLPSGFLCP), 213 to 235 (GNLQVLNLTRNRIRTAEQMGFAD), 246 to 270 (GSELQVLDASHNELRSISESWGISR), 271 to 294 (LRRLQHLNLAYNNLSELSGEALAG), 295 to 318 (LASLRIVNLSNNHLETLPEGLFAG), 320 to 342 (KELREIHLQQNELYELPKGLFHR), 344 to 368 (EQLLVVDLSGNQLTSNHVDNTTFAG), 369 to 392 (LIRLIVLNLAHNALTRIDYRTFKE), 393 to 416 (LYFLQILNLRNNSIGHIEDNAFLP), 417 to 440 (LYNLHTLNLAENRLHTLDDKLFNG), 442 to 464 (YVLSKLTLNNNLISVVEPAVFKN), 465 to 488 (CSDLKELDLSSNQLNEVPRALQDL), 489 to 511 (AMLRTLDLGENQIRTFDNQSFKN), 513 to 535 (HQLTGLRLIDNQIGNITVGMFQD), 536 to 559 (LPRLSVLNLAKNRIQSIERGSFDK), 561 to 582 (FELEAIRLDRNFLADINGVFAT), 584 to 605 (VSLLWLNLSENHLVWFDYAFIP), 606 to 629 (SNLKWLDIHGNYIEALGNYYKLQE), 631 to 652 (IRVKTLDASHNRITEIGPMSIP), 653 to 675 (NTIELLFINNNLIGNVQPNAFVD), and 677 to 699 (ANLARVDLYANQLSKLQLQQLRV). In terms of domain architecture, LRRCT spans 716–773 (NPFECDCTMDWLQRINNLTTRQHPRVMDMANIECVMPHARGAAVRPLSGLRPQDFLCR). 3 cysteine pairs are disulfide-bonded: Cys722-Cys772, Cys796-Cys802, and Cys800-Cys815. 6 LRR repeats span residues 828–851 (PMDSSVVYLDGNNFPVLKNHAFIG), 852–875 (RKNLRALYVNGSQVAAIQNRTFAS), 876–899 (LASLQLLHLADNKLRTLHGYEFEQ), 900–923 (LSALRELYLQNNQLTTIENATLAP), 925–947 (AALELIRIDGNRLVTLPIWQMHA), and 951–979 (GTRLKSISLGRNQWSCRCQFLQALTSYVA). Cysteines 966 and 993 form a disulfide. Residues 1050-1070 (LLAAALALLFLLVVIAMVFAF) traverse the membrane as a helical segment. At 1071 to 1446 (RESLRIWLFA…QGPHVQAYLV (376 aa)) the chain is on the cytoplasmic side. In terms of domain architecture, TIR spans 1096-1233 (KLYDAVLLHS…HFWEKLRYAL (138 aa)). Disordered regions lie at residues 1301-1332 (QNYSTATTATPSPRPQRRGEQPGSGSGGNHHL) and 1388-1446 (RPKR…AYLV). Polar residues predominate over residues 1395–1413 (HLQQAQAGTLGSKASQAAH). The span at 1414-1426 (QQQQQQQQQQQQQ) shows a compositional bias: low complexity. Residues 1427 to 1439 (PNPTAVSGQQQGP) are compositionally biased toward polar residues.

This sequence belongs to the Toll-like receptor family. In terms of tissue distribution, expressed in the fan-shaped body and the ellipsoid body, which are components of the locomotion center in the CNS (at protein level).

Its subcellular location is the cell membrane. In terms of biological role, toll-related receptor which binds to the neurotrophins NT1 and spz5. Essential for antiviral autophagy, it detects and binds to the vesicular stomatitis virus (vsv) following infection. This role is likely to be independent of the canonical Toll, immune deficiency, and JAK-STAT signaling pathways. Functions in olfactory circuit assembly by promoting synaptic partner matching between olfactory receptor neurons (ORN) axons and projection neurons (PN) dendrites partners in the antennal lobe. Function in the Va1d ORNs is necessary and sufficient for correct targeting to their partner PN dendrites. Also involved in the targeting of other classes of ORN axons. Functions with Toll-6 to regulate motor axon targeting and neuronal survival in the central nervous system (CNS). May be an upstream component of the NF-kappa-B (rel) regulatory cascade. This is Toll-like receptor 7 from Drosophila melanogaster (Fruit fly).